A 301-amino-acid polypeptide reads, in one-letter code: Haloalkane dehalogenase (301 aa).

Residues 47 to 284 (PPIVLLHGEP…INASHFIQED (238 aa)) enclose the AB hydrolase-1 domain. Residue Asp123 is the Nucleophile of the active site. Asp250 (proton donor) is an active-site residue. His279 acts as the Proton acceptor in catalysis.

It belongs to the haloalkane dehalogenase family. Type 1 subfamily. In terms of assembly, monomer.

It carries out the reaction 1-haloalkane + H2O = a halide anion + a primary alcohol + H(+). Catalyzes hydrolytic cleavage of carbon-halogen bonds in halogenated aliphatic compounds, leading to the formation of the corresponding primary alcohols, halide ions and protons. The sequence is that of Haloalkane dehalogenase from Mycolicibacterium paratuberculosis (strain ATCC BAA-968 / K-10) (Mycobacterium paratuberculosis).